We begin with the raw amino-acid sequence, 95 residues long: Co-chaperonin GroES (95 aa).

Belongs to the GroES chaperonin family. Heptamer of 7 subunits arranged in a ring. Interacts with the chaperonin GroEL.

The protein resides in the cytoplasm. Functionally, together with the chaperonin GroEL, plays an essential role in assisting protein folding. The GroEL-GroES system forms a nano-cage that allows encapsulation of the non-native substrate proteins and provides a physical environment optimized to promote and accelerate protein folding. GroES binds to the apical surface of the GroEL ring, thereby capping the opening of the GroEL channel. This Rickettsia typhi (strain ATCC VR-144 / Wilmington) protein is Co-chaperonin GroES.